A 663-amino-acid chain; its full sequence is Protein-arginine deiminase type-4 (663 aa).

Ca(2+)-binding residues include N153, D155, D157, D165, D168, E170, D176, and D179. Citrulline is present on residues R205, R212, and R218. Q349 is a binding site for Ca(2+). D350 is a catalytic residue. Ca(2+)-binding residues include E351, E353, D369, and S370. Position 372 is a citrulline (R372). N373 lines the Ca(2+) pocket. Citrulline is present on residues R374 and R383. R374 contributes to the substrate binding site. D388, F407, L410, and E411 together coordinate Ca(2+). Residues H471 and D473 contribute to the active site. R639 contacts substrate. The active site involves C645.

It belongs to the protein arginine deiminase family. It depends on Ca(2+) as a cofactor. Post-translationally, autocitrullination at Arg-372 and Arg-374 inactivates the enzyme. As to expression, expressed in eosinophils and neutrophils, not expressed in peripheral monocytes or lymphocytes.

The protein localises to the cytoplasm. The protein resides in the nucleus. It localises to the cytoplasmic granule. The enzyme catalyses L-arginyl-[protein] + H2O = L-citrullyl-[protein] + NH4(+). With respect to regulation, strongly Inhibited by F-amidine and N-alpha-benzoyl-N5-(2-chloro-1-iminoethyl)-L-ornithine amide (Cl-amidine). These inhibitors are however not specific to PADI4 and also inhibit other members of the family. Incorporation of a carboxylate ortho to the backbone amide of Cl-amidine results in inhibitors with increased specificity for PADI4: N-alpha-(2-carboxyl)benzoyl-N(5)-(2-fluoro-1-iminoethyl)-L-ornithine amide (o-F-amidine) and N-alpha-(2-carboxyl)benzoyl-N(5)-(2-chloro-1-iminoethyl)-L-ornithine amide (o-Cl-amidine). Strongly and specifically inhibited by Thr-Asp-F-amidine (TDFA); other members of the family are not inhibited. Functionally, catalyzes the citrullination/deimination of arginine residues of proteins such as histones, thereby playing a key role in histone code and regulation of stem cell maintenance. Citrullinates histone H1 at 'Arg-54' (to form H1R54ci), histone H3 at 'Arg-2', 'Arg-8', 'Arg-17' and/or 'Arg-26' (to form H3R2ci, H3R8ci, H3R17ci, H3R26ci, respectively) and histone H4 at 'Arg-3' (to form H4R3ci). Acts as a key regulator of stem cell maintenance by mediating citrullination of histone H1: citrullination of 'Arg-54' of histone H1 (H1R54ci) results in H1 displacement from chromatin and global chromatin decondensation, thereby promoting pluripotency and stem cell maintenance. Promotes profound chromatin decondensation during the innate immune response to infection in neutrophils by mediating formation of H1R54ci. Required for the formation of neutrophil extracellular traps (NETs); NETs are mainly composed of DNA fibers and are released by neutrophils to bind pathogens during inflammation. Citrullination of histone H3 prevents their methylation by CARM1 and HRMT1L2/PRMT1 and represses transcription. Citrullinates EP300/P300 at 'Arg-2142', which favors its interaction with NCOA2/GRIP1. In Homo sapiens (Human), this protein is Protein-arginine deiminase type-4 (PADI4).